A 325-amino-acid polypeptide reads, in one-letter code: Putative ankyrin repeat protein RF_0011 (325 aa).

ANK repeat units lie at residues 63–94 (NGNT…AINM), 99–130 (RGQP…NINA), and 134–164 (CGRT…EMII).

This Rickettsia felis (strain ATCC VR-1525 / URRWXCal2) (Rickettsia azadi) protein is Putative ankyrin repeat protein RF_0011.